We begin with the raw amino-acid sequence, 144 residues long: Large ribosomal subunit protein uL15 (144 aa).

The segment at 20-49 (GRGIGSGLGKTGGRGHKGQKSRSGGFHKVG) is disordered. Positions 21–31 (RGIGSGLGKTG) are enriched in gly residues.

The protein belongs to the universal ribosomal protein uL15 family. Part of the 50S ribosomal subunit.

In terms of biological role, binds to the 23S rRNA. This is Large ribosomal subunit protein uL15 from Neisseria meningitidis serogroup C (strain 053442).